An 849-amino-acid polypeptide reads, in one-letter code: MSLFKARDWWSASLGEKEEFDQGCLCVADVDNSGTAHDKIIVGSFSGYLRIFSPHPLKPGDGMQAEDLLLEVQLRDPVLQVEVGKFVSGTEILHLAVLHPRKLCVYSVSGTLGNVEHGNQYQMKLMYEHNLQRTACSMTHGPFGGVKGRDLICIQSMDGMLMFFEQESYAFGRYLPGFLLPGPLSYSPKTDSFVTVSSSRQVESYKYQVLAVATDADSRKENEQQKMGAGKKVVADWILNIGEQALDISIVSFNQTSFSIFVLGERNFFCLKESGQIRFMKKLDYSPSCFHPYSSVNDGTINTLVGNHNNMLLVYQDVTLKWAAQLSQTPVAVKVANFRDLKGVIVTLSESGQLQCSYLGTDPSLFQVPKVESRDINYEDLDVEMKELQRIIKEATKTQDILPKMEKDDDLTLVATVLPDLDSVSQAVDGEVESEVIPSVSVKLCVRSRLTLQKAVLLISTPAPLALTQDQFIFDSLEPGVSKTASASVFLKGNYPPADLEGSAVVSYSKPTELNPEGVPRIVQCKFRLPLKLVCFPVQPSKVANHKLTIDTNKPPVNLINLFPEFIDQVEEDQVSVVGFQLLAGQKVTLLASKTSQRYRIQSEQFEDLWLITREFILRFQDYFLKQGIKDFTCSFSGPVPLQEYFELIDQHFELRLNGEKYEALLSERAVQFRAIQRLLLTRFKDKTPTPLQNLDTLLDGTYRQVIGIADAAEELQRNLFRAFTRLKSATQLVILLIGLWQKLNKEQIAILEGTFLPLLKDGQELGWEESVDAALSHLLRTCLSKSSKEQALNLTSHLSIPKDTSRLKKHITLLCERMSKGGRLSLSADSGSQQAAEMQGTPINPSVS.

The seven-bladed beta-propeller stretch occupies residues 1–407 (MSLFKARDWW…TQDILPKMEK (407 aa)). The interval 825–849 (LSLSADSGSQQAAEMQGTPINPSVS) is disordered. Residues 828 to 849 (SADSGSQQAAEMQGTPINPSVS) are compositionally biased toward polar residues.

The protein localises to the cell projection. Its subcellular location is the cilium membrane. It localises to the cytoplasm. The protein resides in the cytoskeleton. It is found in the microtubule organizing center. The protein localises to the centrosome. Its subcellular location is the centriolar satellite. In terms of biological role, required for ciliogenesis. This chain is Protein PTHB1 (bbs9), found in Xenopus laevis (African clawed frog).